Consider the following 652-residue polypeptide: Epithelial sodium channel subunit gamma (652 aa).

The Cytoplasmic portion of the chain corresponds to 1-54 (MAPGEKIKAKIKKNLPVTGPQAPNIKELMQWYCLNTNTHGCRRIVVSRGRLRRL). The helical transmembrane segment at 55 to 75 (LWILFTLTAVALIFWQCALLI) threads the bilayer. Residues 76–537 (SSFYTVSVSI…EQLLSNIGGQ (462 aa)) are Extracellular-facing. 8 disulfides stabilise this stretch: C100–C286, C210–C217, C263–C270, C375–C460, C397–C456, C401–C452, C410–C437, and C412–C426. The interval 137–224 (RKRREAQSWS…SDCAVYTFSS (88 aa)) is gating release of inhibition by proteolysis (GRIP); protease-sensitive region that is responsible for the proteolytic activation of the channel. A glycan (N-linked (GlcNAc...) asparagine) is linked at N212. N-linked (GlcNAc...) asparagine glycosylation is present at N500. The helical transmembrane segment at 538-558 (LGLWMSCSVVCVIEIIEVFFI) threads the bilayer. Over 559–652 (DSLSIIARHQ…LTDTQTTFPH (94 aa)) the chain is Cytoplasmic. Residues 610–631 (SALSLPPAPGSQVPGTPPPRYN) form a disordered region. The PY motif; recruits WW domain-containing proteins and is thereby required for ubiquitination and inhibition of the channel by NEDD4 and NEDD4L signature appears at 626–630 (PPPRY).

The protein belongs to the amiloride-sensitive sodium channel (TC 1.A.6) family. SCNN1G subfamily. As to quaternary structure, component of the heterotrimeric epithelial sodium channel (ENaC) composed of an alpha/SCNN1A, a beta/SCNN1B and a gamma/SCNN1G subunit. An additional delta/SCNN1D subunit can replace the alpha/SCNN1A subunit to form an alternative channel with specific properties. Interacts with WWP1 (via WW domains). Interacts with WWP2 (via WW domains); inhibits the channel. Interacts with the full-length immature form of PCSK9 (pro-PCSK9); inhibits ENaC by promoting its proteasomal degradation. Interacts with BPIFA1; the interaction is indirect via SCNN1B and inhibits the proteolytic maturation of SCNN1A and SCNN1G and the activation of ENaC. In terms of processing, phosphorylated on serine and threonine residues. Aldosterone and insulin increase the basal level of phosphorylation. Ubiquitinated. Can be ubiquitinated at multiple sites and undergo monoubiquitination and polyubiquitination. Ubiquitination by NEDD4 or NEDD4L inhibits the ENaC channel through endocytosis, intracellular retention and degradation of its individual subunits. Post-translationally, ENaC is activated through the proteolytic maturation of its subunits. Furin cleaves the SCNN1G subunit first, followed by cleavage by prostasin (PRSS8), which results in a stepwise increase in the open probability of the channel due to the release of an inhibitory tract. BPIFA1, which is recruited by the SCNN1B subunit, prevents the proteolytic activation of ENaC. In terms of processing, N-glycosylated. N-linked glycans are processed to complex type during ENaC complex assembly and transport to the plasma membrane.

Its subcellular location is the apical cell membrane. It carries out the reaction Na(+)(in) = Na(+)(out). Originally identified and characterized by its inhibition by the diuretic drug amiloride. Its function is as follows. This is one of the three pore-forming subunits of the heterotrimeric epithelial sodium channel (ENaC), a critical regulator of sodium balance and fluid homeostasis. ENaC operates in epithelial tissues, where it mediates the electrodiffusion of sodium ions from extracellular fluid through the apical membrane of cells, with water following osmotically. It plays a key role in maintaining sodium homeostasis through electrogenic sodium reabsorption in the kidneys. Additionally, ENaC is essential for airway surface liquid homeostasis, which is crucial for proper mucus clearance. This Bos taurus (Bovine) protein is Epithelial sodium channel subunit gamma.